The chain runs to 247 residues: MMDPIHQFNIEPIFTIGHIGGQEIAFTNSSAYMFLAVALTSLLMLGTGRRLVPGRMQSIAEISYEFVADTIRTTAGKEGMKFFPFVFSIFMLVTVSNLVGIIPYTFTISSHIIVTAALAFLVFFTVLIYGFYKNGLRFFKLFVPSGIPVVILPLVVTIEVISFLSRPVSHSVRLFANMLAGHITLKVFASFVTMLGAMGIVGVFGAVLPLALVVALTALELLVAFLQAYVFTILTCIYINDAIHPGH.

The next 6 helical transmembrane spans lie at Ile24 to Met44, Phe82 to Ile102, Ile112 to Tyr132, Leu141 to Ile161, Met194 to Val214, and Leu219 to Ile239.

Belongs to the ATPase A chain family. As to quaternary structure, F-type ATPases have 2 components, CF(1) - the catalytic core - and CF(0) - the membrane proton channel. CF(1) has five subunits: alpha(3), beta(3), gamma(1), delta(1), epsilon(1). CF(0) has three main subunits: a(1), b(2) and c(9-12). The alpha and beta chains form an alternating ring which encloses part of the gamma chain. CF(1) is attached to CF(0) by a central stalk formed by the gamma and epsilon chains, while a peripheral stalk is formed by the delta and b chains.

The protein localises to the cell inner membrane. In terms of biological role, key component of the proton channel; it plays a direct role in the translocation of protons across the membrane. The polypeptide is ATP synthase subunit a (Nitrobacter winogradskyi (strain ATCC 25391 / DSM 10237 / CIP 104748 / NCIMB 11846 / Nb-255)).